The following is a 284-amino-acid chain: Polyamine aminopropyltransferase (284 aa).

The 236-residue stretch at 2–237 (ELWYTEQHTE…GHWLFGFASK (236 aa)) folds into the PABS domain. Position 31 (Gln-31) interacts with S-methyl-5'-thioadenosine. Residues His-62 and Asp-86 each coordinate spermidine. Residues Glu-106 and 137-138 (DG) each bind S-methyl-5'-thioadenosine. Asp-155 (proton acceptor) is an active-site residue. 155 to 158 (DSTD) provides a ligand contact to spermidine. Pro-162 contributes to the S-methyl-5'-thioadenosine binding site.

The protein belongs to the spermidine/spermine synthase family. As to quaternary structure, homodimer or homotetramer.

The protein localises to the cytoplasm. The catalysed reaction is S-adenosyl 3-(methylsulfanyl)propylamine + putrescine = S-methyl-5'-thioadenosine + spermidine + H(+). Its pathway is amine and polyamine biosynthesis; spermidine biosynthesis; spermidine from putrescine: step 1/1. Its function is as follows. Catalyzes the irreversible transfer of a propylamine group from the amino donor S-adenosylmethioninamine (decarboxy-AdoMet) to putrescine (1,4-diaminobutane) to yield spermidine. In Alkaliphilus oremlandii (strain OhILAs) (Clostridium oremlandii (strain OhILAs)), this protein is Polyamine aminopropyltransferase.